We begin with the raw amino-acid sequence, 1690 residues long: DNA-directed RNA polymerase subunit beta' (1690 aa).

Zn(2+)-binding residues include Cys63, Cys65, Cys78, and Cys81. The Mg(2+) site is built by Asp753, Asp755, and Asp757. 4 residues coordinate Zn(2+): Cys1107, Cys1295, Cys1302, and Cys1305.

This sequence belongs to the RNA polymerase beta' chain family. In terms of assembly, the RNAP catalytic core consists of 2 alpha, 1 beta, 1 beta' and 1 omega subunit. When a sigma factor is associated with the core the holoenzyme is formed, which can initiate transcription. Mg(2+) serves as cofactor. It depends on Zn(2+) as a cofactor.

It carries out the reaction RNA(n) + a ribonucleoside 5'-triphosphate = RNA(n+1) + diphosphate. In terms of biological role, DNA-dependent RNA polymerase catalyzes the transcription of DNA into RNA using the four ribonucleoside triphosphates as substrates. The chain is DNA-directed RNA polymerase subunit beta' from Thermotoga sp. (strain RQ2).